Consider the following 84-residue polypeptide: MSILSFLLGEKKKSASVAKERLQLIIAHERAGGHAPADYLPALQRELVAVISKYVKISHDDIRVSLERQDDLEVLEVKIEIPQA.

This sequence belongs to the MinE family.

In terms of biological role, prevents the cell division inhibition by proteins MinC and MinD at internal division sites while permitting inhibition at polar sites. This ensures cell division at the proper site by restricting the formation of a division septum at the midpoint of the long axis of the cell. The sequence is that of Cell division topological specificity factor from Paraburkholderia phytofirmans (strain DSM 17436 / LMG 22146 / PsJN) (Burkholderia phytofirmans).